Consider the following 415-residue polypeptide: Arrestin red cell isoform 3 (415 aa).

The protein belongs to the arrestin family.

It localises to the cytoplasm. This is Arrestin red cell isoform 3 from Oncorhynchus mykiss (Rainbow trout).